The chain runs to 366 residues: Histone-lysine N-methyltransferase SETD7 (366 aa).

3 MORN repeats span residues 36 to 58 (FEGNFVHGEKNGRGKFFFFDGST), 59 to 81 (LEGYYVDDALQGQGVYTYEDGGV), and 106 to 128 (FKGQYKDNNRHGVCWIHYPDGGS). The SET domain maps to 214-336 (ERVYVADSLI…AEEELTVAYG (123 aa)). Residues 226-228 (AGE), N296, H297, and E356 contribute to the S-adenosyl-L-methionine site.

This sequence belongs to the class V-like SAM-binding methyltransferase superfamily. Histone-lysine methyltransferase family. SET7 subfamily. Interacts with IPF1/PDX-1.

It is found in the nucleus. The protein localises to the chromosome. The catalysed reaction is L-lysyl(4)-[histone H3] + S-adenosyl-L-methionine = N(6)-methyl-L-lysyl(4)-[histone H3] + S-adenosyl-L-homocysteine + H(+). It carries out the reaction L-lysyl-[protein] + S-adenosyl-L-methionine = N(6)-methyl-L-lysyl-[protein] + S-adenosyl-L-homocysteine + H(+). In terms of biological role, histone methyltransferase that specifically monomethylates 'Lys-4' of histone H3. H3 'Lys-4' methylation represents a specific tag for epigenetic transcriptional activation. Plays a central role in the transcriptional activation of genes such as collagenase or insulin. Recruited by IPF1/PDX-1 to the insulin promoter, leading to activate transcription. Also has methyltransferase activity toward non-histone proteins such as CGAS, p53/TP53, TAF10, and possibly TAF7 by recognizing and binding the [KR]-[STA]-K in substrate proteins. Monomethylates 'Lys-189' of TAF10, leading to increase the affinity of TAF10 for RNA polymerase II. Monomethylates 'Lys-372' of p53/TP53, stabilizing p53/TP53 and increasing p53/TP53-mediated transcriptional activation. Monomethylates 'Lys-491' of CGAS, promoting interaction between SGF29 and CGAS. The protein is Histone-lysine N-methyltransferase SETD7 (Setd7) of Mus musculus (Mouse).